Consider the following 571-residue polypeptide: Alpha-1D adrenergic receptor (571 aa).

Residues 1 to 94 lie on the Extracellular side of the membrane; that stretch reads MTFRDLLSVN…AVGGLVVSAQ (94 aa). Residues 13 to 75 are disordered; sequence GSRSDGSAGG…SSAGEPGAAG (63 aa). Residues 19 to 34 are compositionally biased toward gly residues; sequence SAGGASAGGSGGGSGG. Positions 35-47 are enriched in low complexity; it reads AAASEGRAVDGVP. A compositionally biased stretch (gly residues) spans 48–57; it reads GTAGSGGVVG. Residues asparagine 64 and asparagine 81 are each glycosylated (N-linked (GlcNAc...) asparagine). A helical transmembrane segment spans residues 95–120; it reads GVGVGVFLAAFILMAVAGNLLVILSV. The Cytoplasmic portion of the chain corresponds to 121 to 132; it reads ACNRHLQTVTNY. Residues 133-158 form a helical membrane-spanning segment; that stretch reads FIVNLAVADLLLSATVLPFSATMEVL. Residues 159–168 are Extracellular-facing; that stretch reads GFWAFGRAFC. The chain crosses the membrane as a helical span at residues 169-191; it reads DVWAAVDVLCCTASILSLCTISV. Topologically, residues 192-212 are cytoplasmic; it reads DRYVGVRHSLKYPSIMTERKA. A helical transmembrane segment spans residues 213–237; sequence AAILALLWAVAIVVSVGPLLGWKEP. Topologically, residues 238-250 are extracellular; sequence VPPDERFCGITEE. The helical transmembrane segment at 251–274 threads the bilayer; it reads AGYAVFSSLCSFYLPMAVIVVMYC. Residues 275-348 lie on the Cytoplasmic side of the membrane; the sequence is RVYVVARSTT…KFSREKKAAK (74 aa). The chain crosses the membrane as a helical span at residues 349-373; that stretch reads TLAIVVGVFVLCWFPFFFVLPLGSL. Residues 374–380 are Extracellular-facing; it reads FPQLKPS. The helical transmembrane segment at 381-405 threads the bilayer; it reads EGVFKVIFWLGYFNSCVNPLIYPCS. The Cytoplasmic portion of the chain corresponds to 406–571; that stretch reads SREFKRAFLR…DYSHLRETDI (166 aa). The S-palmitoyl cysteine moiety is linked to residue cysteine 419. A disordered region spans residues 465-487; the sequence is LPAPEATDTPSAPEAQAPVVGRR.

Belongs to the G-protein coupled receptor 1 family. Adrenergic receptor subfamily. ADRA1D sub-subfamily. As to quaternary structure, interacts with FLNA (via filamin repeat 21); increases PKA-mediated phosphorylation of FLNA. Palmitoylated. Palmitoylation by ZDHHC21 may increase the expression of the receptor and regulate downstream signaling.

The protein localises to the cell membrane. Its function is as follows. This alpha-adrenergic receptor mediates its effect through the influx of extracellular calcium. The chain is Alpha-1D adrenergic receptor (ADRA1D) from Sus scrofa (Pig).